A 586-amino-acid chain; its full sequence is Proline--tRNA ligase (586 aa).

The protein belongs to the class-II aminoacyl-tRNA synthetase family. ProS type 1 subfamily. As to quaternary structure, homodimer.

The protein resides in the cytoplasm. The enzyme catalyses tRNA(Pro) + L-proline + ATP = L-prolyl-tRNA(Pro) + AMP + diphosphate. Functionally, catalyzes the attachment of proline to tRNA(Pro) in a two-step reaction: proline is first activated by ATP to form Pro-AMP and then transferred to the acceptor end of tRNA(Pro). As ProRS can inadvertently accommodate and process non-cognate amino acids such as alanine and cysteine, to avoid such errors it has two additional distinct editing activities against alanine. One activity is designated as 'pretransfer' editing and involves the tRNA(Pro)-independent hydrolysis of activated Ala-AMP. The other activity is designated 'posttransfer' editing and involves deacylation of mischarged Ala-tRNA(Pro). The misacylated Cys-tRNA(Pro) is not edited by ProRS. The chain is Proline--tRNA ligase from Kineococcus radiotolerans (strain ATCC BAA-149 / DSM 14245 / SRS30216).